A 428-amino-acid polypeptide reads, in one-letter code: Adenylosuccinate synthetase (428 aa).

Residues 12–18 (GDEGKGK) and 40–42 (GHS) each bind GTP. Asp-13 (proton acceptor) is an active-site residue. Positions 13 and 40 each coordinate Mg(2+). IMP contacts are provided by residues 13 to 16 (DEGK), 38 to 41 (NAGH), Thr-128, Arg-142, Gln-223, Thr-238, and Arg-302. His-41 acts as the Proton donor in catalysis. A substrate-binding site is contributed by 298–304 (VTTGRPR). GTP is bound by residues Arg-304, 330–332 (KLD), and 412–414 (GTG).

The protein belongs to the adenylosuccinate synthetase family. Homodimer. Mg(2+) serves as cofactor.

The protein resides in the cytoplasm. It catalyses the reaction IMP + L-aspartate + GTP = N(6)-(1,2-dicarboxyethyl)-AMP + GDP + phosphate + 2 H(+). It participates in purine metabolism; AMP biosynthesis via de novo pathway; AMP from IMP: step 1/2. Its function is as follows. Plays an important role in the de novo pathway of purine nucleotide biosynthesis. Catalyzes the first committed step in the biosynthesis of AMP from IMP. In Bifidobacterium longum subsp. infantis (strain ATCC 15697 / DSM 20088 / JCM 1222 / NCTC 11817 / S12), this protein is Adenylosuccinate synthetase.